A 339-amino-acid polypeptide reads, in one-letter code: MKFLDQVDLRVSSGDGGKGVVAWRREKYVPKGGPSGGDGGDGGSVYVEADENLYTLMDLSHNTQVFAEDGEPGGRREQTGASGEDKVIRVPPGTVVKTQTGEVLGEVVEPGQRICVAEGGQGGRGNAFFKSSTNQAPRESQPGEPGEERDLTFELKLMADVGLVGFPNAGKSTLVSSVSAAEPEVADYPFTTLTPQLGMVYVSEYETFVMADIPGIIEDAHEGKGLGLQFLRHIERTSVLLFVIPITSQDLGEEYEALLHELESHEASLLDKPRVVALSKIDILAPDERALLPDVVADEFPDDVPLLPISAVADVGLDQLKYTLFDTVHSTQSADAIDA.

The region spanning 1 to 158 is the Obg domain; the sequence is MKFLDQVDLR…RDLTFELKLM (158 aa). Disordered regions lie at residues 66 to 86 and 125 to 148; these read FAED…GEDK and GNAF…PGEE. A compositionally biased stretch (basic and acidic residues) spans 72–86; it reads PGGRREQTGASGEDK. The span at 129–138 shows a compositional bias: polar residues; it reads FKSSTNQAPR. Positions 159-329 constitute an OBG-type G domain; the sequence is ADVGLVGFPN…LKYTLFDTVH (171 aa). GTP contacts are provided by residues 165–172, 190–194, 212–215, 279–282, and 310–312; these read GFPNAGKS, FTTLT, DIPG, SKID, and SAV. Mg(2+)-binding residues include serine 172 and threonine 192.

Belongs to the TRAFAC class OBG-HflX-like GTPase superfamily. OBG GTPase family. As to quaternary structure, monomer. Mg(2+) serves as cofactor.

It localises to the cytoplasm. Functionally, an essential GTPase which binds GTP, GDP and possibly (p)ppGpp with moderate affinity, with high nucleotide exchange rates and a fairly low GTP hydrolysis rate. Plays a role in control of the cell cycle, stress response, ribosome biogenesis and in those bacteria that undergo differentiation, in morphogenesis control. This chain is GTPase Obg, found in Salinibacter ruber (strain DSM 13855 / M31).